The sequence spans 487 residues: Phosphoglucosamine mutase (487 aa).

The active-site Phosphoserine intermediate is S134. Positions 134, 277, 279, and 281 each coordinate Mg(2+). Phosphoserine is present on S134.

It belongs to the phosphohexose mutase family. Mg(2+) serves as cofactor. In terms of processing, activated by phosphorylation.

It catalyses the reaction alpha-D-glucosamine 1-phosphate = D-glucosamine 6-phosphate. Functionally, catalyzes the conversion of glucosamine-6-phosphate to glucosamine-1-phosphate. The sequence is that of Phosphoglucosamine mutase from Gloeothece citriformis (strain PCC 7424) (Cyanothece sp. (strain PCC 7424)).